Consider the following 126-residue polypeptide: Glycine cleavage system H protein (126 aa).

A Lipoyl-binding domain is found at 22–104 (TVTIGITEYA…YEKAWMVKVE (83 aa)). At Lys-63 the chain carries N6-lipoyllysine.

The protein belongs to the GcvH family. The glycine cleavage system is composed of four proteins: P, T, L and H. It depends on (R)-lipoate as a cofactor.

Its function is as follows. The glycine cleavage system catalyzes the degradation of glycine. The H protein shuttles the methylamine group of glycine from the P protein to the T protein. Functionally, is also involved in protein lipoylation via its role as an octanoyl/lipoyl carrier protein intermediate. In Staphylococcus haemolyticus (strain JCSC1435), this protein is Glycine cleavage system H protein.